The sequence spans 186 residues: Large ribosomal subunit protein uL22 (186 aa).

It belongs to the universal ribosomal protein uL22 family. Component of the large ribosomal subunit (LSU). Mature N.crassa ribosomes consist of a small (40S) and a large (60S) subunit. The 40S small subunit contains 1 molecule of ribosomal RNA (18S rRNA) and at least 32 different proteins. The large 60S subunit contains 3 rRNA molecules (26S, 5.8S and 5S rRNA) and at least 42 different proteins.

The protein resides in the cytoplasm. Its function is as follows. Component of the ribosome, a large ribonucleoprotein complex responsible for the synthesis of proteins in the cell. The small ribosomal subunit (SSU) binds messenger RNAs (mRNAs) and translates the encoded message by selecting cognate aminoacyl-transfer RNA (tRNA) molecules. The large subunit (LSU) contains the ribosomal catalytic site termed the peptidyl transferase center (PTC), which catalyzes the formation of peptide bonds, thereby polymerizing the amino acids delivered by tRNAs into a polypeptide chain. The nascent polypeptides leave the ribosome through a tunnel in the LSU and interact with protein factors that function in enzymatic processing, targeting, and the membrane insertion of nascent chains at the exit of the ribosomal tunnel. This Neurospora crassa (strain ATCC 24698 / 74-OR23-1A / CBS 708.71 / DSM 1257 / FGSC 987) protein is Large ribosomal subunit protein uL22 (rpl-17).